The following is a 146-amino-acid chain: D-aminoacyl-tRNA deacylase (146 aa).

Residues 138–139 (GP) carry the Gly-cisPro motif, important for rejection of L-amino acids motif.

It belongs to the DTD family. As to quaternary structure, homodimer.

The protein resides in the cytoplasm. The catalysed reaction is glycyl-tRNA(Ala) + H2O = tRNA(Ala) + glycine + H(+). It catalyses the reaction a D-aminoacyl-tRNA + H2O = a tRNA + a D-alpha-amino acid + H(+). In terms of biological role, an aminoacyl-tRNA editing enzyme that deacylates mischarged D-aminoacyl-tRNAs. Also deacylates mischarged glycyl-tRNA(Ala), protecting cells against glycine mischarging by AlaRS. Acts via tRNA-based rather than protein-based catalysis; rejects L-amino acids rather than detecting D-amino acids in the active site. By recycling D-aminoacyl-tRNA to D-amino acids and free tRNA molecules, this enzyme counteracts the toxicity associated with the formation of D-aminoacyl-tRNA entities in vivo and helps enforce protein L-homochirality. The polypeptide is D-aminoacyl-tRNA deacylase (Xanthomonas axonopodis pv. citri (strain 306)).